A 187-amino-acid polypeptide reads, in one-letter code: Ribosome maturation factor RimM (187 aa).

One can recognise a PRC barrel domain in the interval 95-178; that stretch reads DEDEFFYADL…GLVEDKDESL (84 aa).

This sequence belongs to the RimM family. Binds ribosomal protein uS19.

The protein localises to the cytoplasm. Its function is as follows. An accessory protein needed during the final step in the assembly of 30S ribosomal subunit, possibly for assembly of the head region. Essential for efficient processing of 16S rRNA. May be needed both before and after RbfA during the maturation of 16S rRNA. It has affinity for free ribosomal 30S subunits but not for 70S ribosomes. This Sinorhizobium fredii (strain NBRC 101917 / NGR234) protein is Ribosome maturation factor RimM.